The sequence spans 396 residues: Non-homologous end joining protein Ku (396 aa).

The region spanning 9–189 (ISFGLVSIPV…DVAVRPQELS (181 aa)) is the Ku domain. The segment covering 278 to 288 (DGDAGPAAAGV) has biased composition (low complexity). Positions 278–396 (DGDAGPAAAG…SKTPPTRRSA (119 aa)) are disordered. A compositionally biased stretch (basic and acidic residues) spans 294-312 (DDKASDDKASDDKASDGRR). The segment covering 315–336 (RTSSVKGASSAPGTRSTARKTP) has biased composition (polar residues). Low complexity predominate over residues 337–396 (SSTRSTAKTNAATKTPPAKTSAAKASAAKTSAAKATSSRTAPKTAPRTPTSKTPPTRRSA).

Belongs to the prokaryotic Ku family. As to quaternary structure, homodimer. Interacts with LigD.

In terms of biological role, with LigD forms a non-homologous end joining (NHEJ) DNA repair enzyme, which repairs dsDNA breaks with reduced fidelity. Binds linear dsDNA with 5'- and 3'- overhangs but not closed circular dsDNA nor ssDNA. Recruits and stimulates the ligase activity of LigD. This Frankia casuarinae (strain DSM 45818 / CECT 9043 / HFP020203 / CcI3) protein is Non-homologous end joining protein Ku.